Here is a 731-residue protein sequence, read N- to C-terminus: ARS-binding factor 1 (731 aa).

Lys-18 participates in a covalent cross-link: Glycyl lysine isopeptide (Lys-Gly) (interchain with G-Cter in ubiquitin). Low complexity-rich tracts occupy residues 84 to 99 (ASSE…NTNP) and 111 to 129 (NNMN…NKVS). Disordered regions lie at residues 84 to 132 (ASSE…SNDS), 146 to 227 (ANTH…DDVH), 251 to 308 (VANV…PSSI), and 439 to 463 (YNDL…GTNL). Over residues 149–161 (HPDDTNDKVESRS) the composition is skewed to basic and acidic residues. Polar residues predominate over residues 177 to 186 (IFKQQGVTIK). Phosphothreonine is present on Thr-189. Phosphoserine is present on Ser-193. Composition is skewed to low complexity over residues 270–308 (TNNN…PSSI) and 445–454 (SSSSNNNNNN). A Phosphoserine modification is found at Ser-467. Residues 475–539 (EISSAGTSSN…PSVNKWSKPD (65 aa)) form a disordered region. Residues 481–510 (TSSNTTKNVNNNKNDSNDDNNGNNNNDASN) are compositionally biased toward low complexity. A phosphoserine mark is found at Ser-554 and Ser-618. Disordered stretches follow at residues 590–643 (RSID…DDKL) and 687–731 (KNTT…LRGQ). At Ser-624 the chain carries Phosphoserine; by PKC. C-terminal sequence regions lie at residues 624–628 (SKRQH) and 639–662 (EDDK…KEVE). A compositionally biased stretch (basic and acidic residues) spans 634 to 643 (LEERNEDDKL). The segment covering 689–698 (TTHHNNHHSQ) has biased composition (basic residues). Ser-720 carries the phosphoserine; by CK2 modification.

The protein belongs to the BAF1 family. As to quaternary structure, component of the global genome repair (GGR) complex composed of at least ABF1, RAD7 and RAD16. Interacts with PSE1. Post-translationally, extensively phosphorylated on Ser and Thr residues.

It localises to the nucleus. In terms of biological role, general regulatory factor (GRF) that contributes to transcriptional activation of a large number of genes, as well as to DNA replication, silencing and telomere structure. Involved in the transcription activation of a subset of ribosomal protein genes. Binds the ARS-elements found in many promoters. Binds to the sequence 5'-TCN(7)ACG-3'. Influences on genome-wide nucleosome occupancy and affects chromatin structure, and probably dynamics. As a component of the global genome repair (GGR) complex, promotes global genome nucleotide excision repair (GG-NER) which removes DNA damage from nontranscribing DNA. Component of the regulatory network controlling mitotic and meiotic cell cycle progression. The polypeptide is ARS-binding factor 1 (ABF1) (Saccharomyces cerevisiae (strain ATCC 204508 / S288c) (Baker's yeast)).